The chain runs to 270 residues: Glutamate 5-kinase (270 aa).

K17 serves as a coordination point for ATP. Substrate contacts are provided by S57, D144, and N160. Residues 180-181 and 222-228 each bind ATP; these read SD and TGGMTSK.

Belongs to the glutamate 5-kinase family.

Its subcellular location is the cytoplasm. It carries out the reaction L-glutamate + ATP = L-glutamyl 5-phosphate + ADP. Its pathway is amino-acid biosynthesis; L-proline biosynthesis; L-glutamate 5-semialdehyde from L-glutamate: step 1/2. In terms of biological role, catalyzes the transfer of a phosphate group to glutamate to form L-glutamate 5-phosphate. The chain is Glutamate 5-kinase from Lactococcus lactis subsp. cremoris (strain SK11).